Consider the following 61-residue polypeptide: Metallothionein-1E (61 aa).

M1 is subject to N-acetylmethionine. Positions M1–C29 are beta. A divalent metal cation-binding residues include C5, C7, C13, C15, C19, C21, C24, C26, C29, C33, C34, C36, C37, C41, C44, C48, C50, C57, C59, and C60. Residues K30–A61 are alpha.

The protein belongs to the metallothionein superfamily. Type 1 family. As to quaternary structure, monomer.

In terms of biological role, metallothioneins have a high content of cysteine residues that bind various heavy metals; these proteins are transcriptionally regulated by both heavy metals and glucocorticoids. This chain is Metallothionein-1E (MT1E), found in Sus scrofa (Pig).